The chain runs to 401 residues: Formate-dependent phosphoribosylglycinamide formyltransferase (401 aa).

Residues 22 to 23 (EL) and E82 each bind N(1)-(5-phospho-beta-D-ribosyl)glycinamide. ATP contacts are provided by residues R115, K157, 162–167 (SSGKGQ), 197–200 (EGFI), and E205. Residues 120–315 (RLAAETLGLP…EFELHARAIL (196 aa)) enclose the ATP-grasp domain. 2 residues coordinate Mg(2+): E274 and E286. Residues D293, K362, and 369-370 (RR) contribute to the N(1)-(5-phospho-beta-D-ribosyl)glycinamide site.

Belongs to the PurK/PurT family. In terms of assembly, homodimer.

The catalysed reaction is N(1)-(5-phospho-beta-D-ribosyl)glycinamide + formate + ATP = N(2)-formyl-N(1)-(5-phospho-beta-D-ribosyl)glycinamide + ADP + phosphate + H(+). It participates in purine metabolism; IMP biosynthesis via de novo pathway; N(2)-formyl-N(1)-(5-phospho-D-ribosyl)glycinamide from N(1)-(5-phospho-D-ribosyl)glycinamide (formate route): step 1/1. Its function is as follows. Involved in the de novo purine biosynthesis. Catalyzes the transfer of formate to 5-phospho-ribosyl-glycinamide (GAR), producing 5-phospho-ribosyl-N-formylglycinamide (FGAR). Formate is provided by PurU via hydrolysis of 10-formyl-tetrahydrofolate. This Cupriavidus pinatubonensis (strain JMP 134 / LMG 1197) (Cupriavidus necator (strain JMP 134)) protein is Formate-dependent phosphoribosylglycinamide formyltransferase.